Consider the following 423-residue polypeptide: uncharacterized protein (423 aa).

It belongs to the asfivirus E423R family.

The protein resides in the virion. This is an uncharacterized protein from African swine fever virus (isolate Tick/Malawi/Lil 20-1/1983) (ASFV).